The chain runs to 358 residues: Protein ocs (358 aa).

The protein belongs to the lysopine/nopaline/octopine/opine/vitopine dehydrogenases family. As to quaternary structure, monomer.

The enzyme catalyses D-octopine + NAD(+) + H2O = L-arginine + pyruvate + NADH + H(+). The catalysed reaction is D-lysopine + NADP(+) + H2O = L-lysine + pyruvate + NADPH + H(+). Reductive condensation of pyruvate and arginine, lysine, histidine, or octopine to form octopine, lysopine, histopine, or octopinic acid, respectively. NADPH is the preferred cofactor, but NADH can also be used. In Agrobacterium tumefaciens (strain Ach5), this protein is Protein ocs (ocs).